Here is a 146-residue protein sequence, read N- to C-terminus: Large ribosomal subunit protein uL15 (146 aa).

Residues 1 to 13 show a composition bias toward basic and acidic residues; it reads MKLHELKPSEGSR. The segment at 1-57 is disordered; the sequence is MKLHELKPSEGSRKTRNRVGRGIGSGNGKTAGKGHKGQNARSGGGVRPGFEGGQMPL. Composition is skewed to gly residues over residues 21 to 31 and 42 to 52; these read RGIGSGNGKTA and SGGGVRPGFEG.

The protein belongs to the universal ribosomal protein uL15 family. Part of the 50S ribosomal subunit.

In terms of biological role, binds to the 23S rRNA. This Bacillus subtilis (strain 168) protein is Large ribosomal subunit protein uL15.